Reading from the N-terminus, the 92-residue chain is Small ribosomal subunit protein bS20 (92 aa).

The tract at residues 1–23 (MANTTSAKKATRKIARRTDVNKA) is disordered.

It belongs to the bacterial ribosomal protein bS20 family.

In terms of biological role, binds directly to 16S ribosomal RNA. This chain is Small ribosomal subunit protein bS20, found in Rhizobium etli (strain CIAT 652).